Reading from the N-terminus, the 492-residue chain is Cytochrome P450 2A2 (492 aa).

C437 contributes to the heme binding site.

This sequence belongs to the cytochrome P450 family. Heme serves as cofactor. In terms of tissue distribution, liver specific.

Its subcellular location is the endoplasmic reticulum membrane. It localises to the microsome membrane. The enzyme catalyses an organic molecule + reduced [NADPH--hemoprotein reductase] + O2 = an alcohol + oxidized [NADPH--hemoprotein reductase] + H2O + H(+). Its function is as follows. Highly active in the 15-alpha-hydroxylation of testosterone. This Rattus norvegicus (Rat) protein is Cytochrome P450 2A2 (Cyp2a2).